A 585-amino-acid chain; its full sequence is Pyruvate kinase (585 aa).

Arg-32 serves as a coordination point for substrate. Residues Asn-34, Ser-36, Asp-66, and Thr-67 each coordinate K(+). 34–37 (NFSH) contributes to the ATP binding site. Arg-73 and Lys-156 together coordinate ATP. Position 221 (Glu-221) interacts with Mg(2+). The substrate site is built by Gly-244, Asp-245, and Thr-277. Residue Asp-245 participates in Mg(2+) binding.

The protein belongs to the pyruvate kinase family. This sequence in the C-terminal section; belongs to the PEP-utilizing enzyme family. It depends on Mg(2+) as a cofactor. K(+) is required as a cofactor.

The enzyme catalyses pyruvate + ATP = phosphoenolpyruvate + ADP + H(+). The protein operates within carbohydrate degradation; glycolysis; pyruvate from D-glyceraldehyde 3-phosphate: step 5/5. In Staphylococcus aureus (strain bovine RF122 / ET3-1), this protein is Pyruvate kinase (pyk).